We begin with the raw amino-acid sequence, 786 residues long: Endonuclease MutS2 (786 aa).

Residue 335–342 (GPNTGGKT) coordinates ATP. Residues 711–786 (LDLRGERFEN…GLGVTVVELK (76 aa)) enclose the Smr domain.

It belongs to the DNA mismatch repair MutS family. MutS2 subfamily. As to quaternary structure, homodimer. Binds to stalled ribosomes, contacting rRNA.

Endonuclease that is involved in the suppression of homologous recombination and thus may have a key role in the control of bacterial genetic diversity. In terms of biological role, acts as a ribosome collision sensor, splitting the ribosome into its 2 subunits. Detects stalled/collided 70S ribosomes which it binds and splits by an ATP-hydrolysis driven conformational change. Acts upstream of the ribosome quality control system (RQC), a ribosome-associated complex that mediates the extraction of incompletely synthesized nascent chains from stalled ribosomes and their subsequent degradation. Probably generates substrates for RQC. The polypeptide is Endonuclease MutS2 (Bacillus cereus (strain Q1)).